The following is a 96-amino-acid chain: UPF0235 protein YggU (96 aa).

This sequence belongs to the UPF0235 family.

The polypeptide is UPF0235 protein YggU (Escherichia coli (strain K12 / MC4100 / BW2952)).